We begin with the raw amino-acid sequence, 353 residues long: Photosystem II D2 protein (353 aa).

T2 is modified (N-acetylthreonine). T2 carries the phosphothreonine modification. Residues 41-61 (TAYFALGGWFTGTTFVTSWYT) traverse the membrane as a helical segment. H118 is a binding site for chlorophyll a. Residues 125-141 (GFMLRQFELARSVQLRP) traverse the membrane as a helical segment. Pheophytin a is bound by residues Q130 and N143. A helical membrane pass occupies residues 153-166 (VFVSVFLIYPLGQS). H198 contacts chlorophyll a. A helical membrane pass occupies residues 208–228 (AALLCAIHGATVENTLFEDGD). The a plastoquinone site is built by H215 and F262. H215 lines the Fe cation pocket. Fe cation is bound at residue H269. A helical transmembrane segment spans residues 279–295 (GLWMSAIGVVGLALNLR).

It belongs to the reaction center PufL/M/PsbA/D family. As to quaternary structure, PSII is composed of 1 copy each of membrane proteins PsbA, PsbB, PsbC, PsbD, PsbE, PsbF, PsbH, PsbI, PsbJ, PsbK, PsbL, PsbM, PsbT, PsbX, PsbY, PsbZ, Psb30/Ycf12, at least 3 peripheral proteins of the oxygen-evolving complex and a large number of cofactors. It forms dimeric complexes. The D1/D2 heterodimer binds P680, chlorophylls that are the primary electron donor of PSII, and subsequent electron acceptors. It shares a non-heme iron and each subunit binds pheophytin, quinone, additional chlorophylls, carotenoids and lipids. There is also a Cl(-1) ion associated with D1 and D2, which is required for oxygen evolution. The PSII complex binds additional chlorophylls, carotenoids and specific lipids. is required as a cofactor.

The protein localises to the plastid. Its subcellular location is the chloroplast thylakoid membrane. The catalysed reaction is 2 a plastoquinone + 4 hnu + 2 H2O = 2 a plastoquinol + O2. In terms of biological role, photosystem II (PSII) is a light-driven water:plastoquinone oxidoreductase that uses light energy to abstract electrons from H(2)O, generating O(2) and a proton gradient subsequently used for ATP formation. It consists of a core antenna complex that captures photons, and an electron transfer chain that converts photonic excitation into a charge separation. The D1/D2 (PsbA/PsbD) reaction center heterodimer binds P680, the primary electron donor of PSII as well as several subsequent electron acceptors. D2 is needed for assembly of a stable PSII complex. In Adiantum capillus-veneris (Maidenhair fern), this protein is Photosystem II D2 protein.